The chain runs to 173 residues: NEDD4-binding protein 2-like 1 (173 aa).

Positions 1–35 are disordered; the sequence is MEESFLESFGRLSLRQQQPPPPRPPAPPPLRGTPP. Residues 18–32 are compositionally biased toward pro residues; it reads QPPPPRPPAPPPLRG.

In terms of assembly, interacts with dynactin subunit proteins, including DCTN4, DCTN5 and DCTN5.

In terms of biological role, might play a role in adipocyte differentiation and triglyceride accumulation. This is NEDD4-binding protein 2-like 1 (N4BP2L1) from Bos taurus (Bovine).